Here is a 681-residue protein sequence, read N- to C-terminus: PTS system glucose-specific EIICBA component (681 aa).

The 412-residue stretch at 3–414 (KKLFGQLQRI…LKYKTPGRED (412 aa)) folds into the PTS EIIC type-1 domain. 10 consecutive transmembrane segments (helical) span residues 16–36 (LMLP…GTAM), 73–93 (MIFA…AAIA), 126–146 (ILGI…GALA), 170–190 (FVPI…ALIW), 199–219 (AFST…FGFI), 273–293 (FMQG…LAIY), 303–323 (VVAG…ITEP), 328–348 (FLFV…LSFL), 355–375 (LHLG…GILP), and 383–403 (VIPV…FLIV). The 82-residue stretch at 425–506 (TELPYAVLEA…QQIMNGQVVE (82 aa)) folds into the PTS EIIB type-1 domain. Cysteine 447 functions as the Phosphocysteine intermediate; for EIIB activity in the catalytic mechanism. Positions 551–655 (DQVFSEKMMG…SDITPIIVTQ (105 aa)) constitute a PTS EIIA type-1 domain. The Tele-phosphohistidine intermediate; for EIIA activity role is filled by histidine 603.

It localises to the cell membrane. The catalysed reaction is N(pros)-phospho-L-histidyl-[protein] + D-glucose(out) = D-glucose 6-phosphate(in) + L-histidyl-[protein]. Functionally, the phosphoenolpyruvate-dependent sugar phosphotransferase system (sugar PTS), a major carbohydrate active transport system, catalyzes the phosphorylation of incoming sugar substrates concomitantly with their translocation across the cell membrane. This system is involved in glucose transport. The polypeptide is PTS system glucose-specific EIICBA component (ptsG) (Staphylococcus aureus (strain NCTC 8325 / PS 47)).